A 90-amino-acid chain; its full sequence is E22 protein (90 aa).

The sequence is that of E22 protein (43) from Bacillus subtilis (Bacteriophage SP01).